Reading from the N-terminus, the 1285-residue chain is Tat-binding homolog 7 (1285 aa).

Disordered stretches follow at residues 1 to 95, 121 to 173, 224 to 243, and 258 to 359; these read MARS…LTYR, MSDD…RTRR, GREEEEEGDEEEAESGEKEQ, and QEDE…ERGR. Composition is skewed to acidic residues over residues 226-237 and 258-270; these read EEEEEGDEEEAE and QEDEESSNAESSE. The span at 311-325 shows a compositional bias: basic residues; the sequence is NRHHRNRNTSNRRRR. ATP is bound at residue 446–453; that stretch reads GPPGTGKT. The Bromo domain occupies 928-1032; it reads ALQRQMRMFF…NTFRDAIDDM (105 aa). The disordered stretch occupies residues 1100–1196; the sequence is EKLKEKLGIS…PTIQSSSSQE (97 aa). The segment covering 1136-1149 has biased composition (basic residues); that stretch reads KLNKKKKDQKRNKK. Acidic residues predominate over residues 1155 to 1175; that stretch reads PDGDDTEETEEAVAENNVDAD.

Belongs to the AAA ATPase family.

Functionally, thought to form a complex that enhances transcription from repetitive DNA sequences by modulating chromatin structure. The chain is Tat-binding homolog 7 from Caenorhabditis briggsae.